Here is a 414-residue protein sequence, read N- to C-terminus: Tryptophan synthase beta chain (414 aa).

The disordered stretch occupies residues 1-26 (MVSTFSRKNQNYKKDDLNQPSKDGRF). Residues 12-26 (YKKDDLNQPSKDGRF) are compositionally biased toward basic and acidic residues. K109 is subject to N6-(pyridoxal phosphate)lysine.

Belongs to the TrpB family. In terms of assembly, tetramer of two alpha and two beta chains. Pyridoxal 5'-phosphate is required as a cofactor.

The enzyme catalyses (1S,2R)-1-C-(indol-3-yl)glycerol 3-phosphate + L-serine = D-glyceraldehyde 3-phosphate + L-tryptophan + H2O. The protein operates within amino-acid biosynthesis; L-tryptophan biosynthesis; L-tryptophan from chorismate: step 5/5. Functionally, the beta subunit is responsible for the synthesis of L-tryptophan from indole and L-serine. The sequence is that of Tryptophan synthase beta chain from Prochlorococcus marinus (strain MIT 9215).